A 96-amino-acid polypeptide reads, in one-letter code: Protein transport protein Sec61 subunit beta (96 aa).

Polar residues predominate over residues 1-17 (MPGPTPSGTNVGSSGRS). Residues 1 to 54 (MPGPTPSGTNVGSSGRSPSKAVAARAAGSTVRQRKNASCGTRSAGRTTSAGTGG) form a disordered region. Pro-2 carries the post-translational modification N-acetylproline. Residues 2–71 (PGPTPSGTNV…DSPGLKVGPV (70 aa)) lie on the Cytoplasmic side of the membrane. Ser-7 carries the post-translational modification Phosphoserine. Phosphothreonine is present on Thr-9. A phosphoserine mark is found at Ser-13, Ser-14, and Ser-17. Cys-39 carries the S-palmitoyl cysteine lipid modification. Positions 40 to 50 (GTRSAGRTTSA) are enriched in low complexity. The chain crosses the membrane as a helical span at residues 72-91 (PVLVMSLLFIASVFMLHIWG). At 92–96 (KYTRS) the chain is on the lumenal side.

The protein belongs to the SEC61-beta family. In terms of assembly, the SEC61 channel-forming translocon complex consists of channel-forming core components SEC61A1, SEC61B and SEC61G and different auxiliary components such as SEC62 and SEC63. The SEC61 channel associates with the multi-pass translocon (MPT) complex. Interacts with TRAM1.

It localises to the endoplasmic reticulum membrane. In terms of biological role, component of SEC61 channel-forming translocon complex that mediates transport of signal peptide-containing precursor polypeptides across the endoplasmic reticulum (ER). Forms a ribosome receptor and a gated pore in the ER membrane, both functions required for cotranslational translocation of nascent polypeptides. The SEC61 channel is also involved in ER membrane insertion of transmembrane proteins: it mediates membrane insertion of the first few transmembrane segments of proteins, while insertion of subsequent transmembrane regions of multi-pass membrane proteins is mediated by the multi-pass translocon (MPT) complex. The SEC61 channel cooperates with the translocating protein TRAM1 to import nascent proteins into the ER. In Canis lupus familiaris (Dog), this protein is Protein transport protein Sec61 subunit beta (SEC61B).